A 305-amino-acid chain; its full sequence is MAMYSLFRSVRSEVVKGCLTQHVQSLFTSCPSLAADKALLLQLRKSTGYTFVNCKKALEKCNNDITQAESWLHEQAKKEGWSKATKLEGRKAKEGLIGLMMHDNAAVMVEVNCETDFVARNEKFQQLVKDVALSVMAHQSTSKKTGFIKSVLSSEDMSKLNAPDGPSLADQLALTIGRLGENIAMRRAVSLSVPSDWHIGSYIHGTVAGQVGIEMGRYGSLVVFQGEPKEGTYALGRKLAQHVMGEAPVSLGNMDDLSCGDSETRLLPQTFLPDPKYTVAQYLTLQDARVLDFIRFQCGESSSQE.

It belongs to the EF-Ts family.

The protein localises to the mitochondrion. Associates with the EF-Tu.GDP complex and induces the exchange of GDP to GTP. It remains bound to the aminoacyl-tRNA.EF-Tu.GTP complex up to the GTP hydrolysis stage on the ribosome. The chain is Elongation factor Ts, mitochondrial (tsfm) from Danio rerio (Zebrafish).